The primary structure comprises 238 residues: Sugar fermentation stimulation protein homolog (238 aa).

The protein belongs to the SfsA family.

This chain is Sugar fermentation stimulation protein homolog, found in Histophilus somni (strain 2336) (Haemophilus somnus).